Here is a 339-residue protein sequence, read N- to C-terminus: uncharacterized protein (339 aa).

28–35 (GPINSGKT) is an ATP binding site.

Belongs to the archaeal ATPase family.

This is an uncharacterized protein from Pyrococcus abyssi (strain GE5 / Orsay).